A 30-amino-acid polypeptide reads, in one-letter code: GILLDKLKNFAKGVAQSLLNKASCALSGQC.

A disulfide bridge links C24 with C30.

Expressed by the skin glands.

Its subcellular location is the secreted. In terms of biological role, antimicrobial peptide. This is Brevinin-2Rg from Pelophylax ridibundus (Marsh frog).